A 244-amino-acid polypeptide reads, in one-letter code: Probable transcriptional regulatory protein XfasM23_0940 (244 aa).

The protein belongs to the TACO1 family.

It localises to the cytoplasm. The polypeptide is Probable transcriptional regulatory protein XfasM23_0940 (Xylella fastidiosa (strain M23)).